Here is a 318-residue protein sequence, read N- to C-terminus: MPNIVLFSGSSHQDLSQRVADRLGLELGKVVTKKFSNQETSVEIGESVRGEDVYIIQSGCGEINDNLMELLIMINACKIASSSRVTAVIPCFPYARQDKKDKSRAPISAKLVANMLSVAGADHIITMDLHASQIQGFFDIPVDNLYAEPAVLQWIRENIAEWKNCIIVSPDAGGAKRVTSIADRLNVEFALIHKERKKANEVDRMVLVGDVKDRVAILVDDMADTCGTICHAADKLLSAGATKVYAILTHGIFSGPAISRINNAAFEAVVVTNTIPQEDKMKHCTKIQVIDISMILAEAIRRTHNGESVSYLFSHVPL.

96–101 (RQDKKD) contacts ATP. Positions 128, 130, 139, and 143 each coordinate Mg(2+). Residue H130 coordinates ATP. A binding of phosphoribosylpyrophosphate region spans residues 212–227 (KDRVAILVDDMADTCG).

The protein belongs to the ribose-phosphate pyrophosphokinase family. Homodimer. The active form is probably a hexamer composed of 3 homodimers. The cofactor is Mg(2+).

It catalyses the reaction D-ribose 5-phosphate + ATP = 5-phospho-alpha-D-ribose 1-diphosphate + AMP + H(+). Its pathway is metabolic intermediate biosynthesis; 5-phospho-alpha-D-ribose 1-diphosphate biosynthesis; 5-phospho-alpha-D-ribose 1-diphosphate from D-ribose 5-phosphate (route I): step 1/1. Activated by magnesium and inorganic phosphate. Competitively or non-competitively inhibited by ADP, 2,3-bisphosphoglyceride or GDP. Its function is as follows. Catalyzes the synthesis of phosphoribosylpyrophosphate (PRPP) that is essential for nucleotide synthesis. The polypeptide is Ribose-phosphate pyrophosphokinase 2 (PRPS2) (Homo sapiens (Human)).